The following is a 421-amino-acid chain: MDSEPSWTATPSPGGTLFVPNTTTPWLGRDEELAKVEIGILATVLVLATGGNLAVLLILGLQGHKRSRMHLFVLHLALTDLGVALFQVLPQLLWDITYRFQGSDLLCRAVKYLQVLSMFASTYMLLAMTLDRYLAVCHPLRSLQQPSQSTYPLIAAPWLLAAILSLPQVFIFSLREVIQGSGVLDCWADFYFSWGPRAYITWTTMAIFVLPVVVLTACYGLICHEIYKNLKVKTQAGREERRGWPKSSSSAAAAATRGLPSRVSSISTISRAKIRTVKMTFVIVLAYIACWAPFFSVQMWSVWDENAPNEDSTNVAFTISMLLGNLSSCCNPWIYMGFNSHLLPRSLSHRACCRGSKPRVHRQLSNSSLASRRTTLLTHTCGPSTLRLSLNLSLHAKPKPAGSLKDLEQVDGEATMETSIS.

Residues 1-35 (MDSEPSWTATPSPGGTLFVPNTTTPWLGRDEELAK) lie on the Extracellular side of the membrane. Residue Asn-21 is glycosylated (N-linked (GlcNAc...) asparagine). Residues 36–59 (VEIGILATVLVLATGGNLAVLLIL) form a helical membrane-spanning segment. Over 60-71 (GLQGHKRSRMHL) the chain is Cytoplasmic. Residues 72-93 (FVLHLALTDLGVALFQVLPQLL) form a helical membrane-spanning segment. Residues 94 to 108 (WDITYRFQGSDLLCR) are Extracellular-facing. Cys-107 and Cys-186 are joined by a disulfide. A helical transmembrane segment spans residues 109–130 (AVKYLQVLSMFASTYMLLAMTL). Over 131-151 (DRYLAVCHPLRSLQQPSQSTY) the chain is Cytoplasmic. Residues 152 to 173 (PLIAAPWLLAAILSLPQVFIFS) form a helical membrane-spanning segment. At 174-202 (LREVIQGSGVLDCWADFYFSWGPRAYITW) the chain is on the extracellular side. The helical transmembrane segment at 203 to 223 (TTMAIFVLPVVVLTACYGLIC) threads the bilayer. Topologically, residues 224 to 280 (HEIYKNLKVKTQAGREERRGWPKSSSSAAAAATRGLPSRVSSISTISRAKIRTVKMT) are cytoplasmic. A helical membrane pass occupies residues 281-300 (FVIVLAYIACWAPFFSVQMW). The Extracellular segment spans residues 301-318 (SVWDENAPNEDSTNVAFT). Residues 319–338 (ISMLLGNLSSCCNPWIYMGF) form a helical membrane-spanning segment. At 339–421 (NSHLLPRSLS…GEATMETSIS (83 aa)) the chain is on the cytoplasmic side. The segment at 399 to 421 (KPAGSLKDLEQVDGEATMETSIS) is disordered.

It belongs to the G-protein coupled receptor 1 family. Vasopressin/oxytocin receptor subfamily.

The protein resides in the cell membrane. Functionally, receptor for arginine vasopressin. The activity of this receptor is mediated by G proteins which activate a phosphatidyl-inositol-calcium second messenger system. This Mus musculus (Mouse) protein is Vasopressin V1b receptor (Avpr1b).